The following is a 349-amino-acid chain: S-adenosylmethionine:tRNA ribosyltransferase-isomerase (349 aa).

It belongs to the QueA family. In terms of assembly, monomer.

It is found in the cytoplasm. It carries out the reaction 7-aminomethyl-7-carbaguanosine(34) in tRNA + S-adenosyl-L-methionine = epoxyqueuosine(34) in tRNA + adenine + L-methionine + 2 H(+). Its pathway is tRNA modification; tRNA-queuosine biosynthesis. Transfers and isomerizes the ribose moiety from AdoMet to the 7-aminomethyl group of 7-deazaguanine (preQ1-tRNA) to give epoxyqueuosine (oQ-tRNA). The protein is S-adenosylmethionine:tRNA ribosyltransferase-isomerase of Pseudomonas fluorescens (strain SBW25).